The sequence spans 292 residues: AhcY transcriptional activator HvrB (292 aa).

The HTH lysR-type domain maps to 10–67 (PPLTALRAFAATASEGGFSAAARKLNVTHAAIAQQVRALEADLDVPLVWRDGKHLHLT). The segment at residues 27-46 (FSAAARKLNVTHAAIAQQVR) is a DNA-binding region (H-T-H motif).

Belongs to the LysR transcriptional regulatory family.

Functions as a low-light activator of ahcY expression (gene for S-adenosyl-L-homocysteine hydrolase) and as a high-light activator of an uncharacterized 21.6 kDa protein in the ahcY-hvrB intergenic region (orf5). It is also a negative regulator of its own expression. The protein is AhcY transcriptional activator HvrB (hvrB) of Rhodobacter capsulatus (strain ATCC BAA-309 / NBRC 16581 / SB1003).